The chain runs to 309 residues: Ribonuclease Z (309 aa).

H63, H65, D67, H68, H145, D216, and H274 together coordinate Zn(2+). D67 acts as the Proton acceptor in catalysis.

Belongs to the RNase Z family. As to quaternary structure, homodimer. Requires Zn(2+) as cofactor.

It carries out the reaction Endonucleolytic cleavage of RNA, removing extra 3' nucleotides from tRNA precursor, generating 3' termini of tRNAs. A 3'-hydroxy group is left at the tRNA terminus and a 5'-phosphoryl group is left at the trailer molecule.. Its function is as follows. Zinc phosphodiesterase, which displays some tRNA 3'-processing endonuclease activity. Probably involved in tRNA maturation, by removing a 3'-trailer from precursor tRNA. The sequence is that of Ribonuclease Z from Streptococcus gordonii (strain Challis / ATCC 35105 / BCRC 15272 / CH1 / DL1 / V288).